The primary structure comprises 358 residues: Fructose-bisphosphate aldolase 1, cytoplasmic (358 aa).

Residue arginine 39 participates in substrate binding. Catalysis depends on glutamate 183, which acts as the Proton acceptor. Lysine 225 serves as the catalytic Schiff-base intermediate with dihydroxyacetone-P. Substrate-binding positions include 266–268 (SGG) and arginine 298.

The protein belongs to the class I fructose-bisphosphate aldolase family. As to quaternary structure, homotetramer. In terms of tissue distribution, expressed in callus.

The protein localises to the cytoplasm. The protein resides in the cytosol. It carries out the reaction beta-D-fructose 1,6-bisphosphate = D-glyceraldehyde 3-phosphate + dihydroxyacetone phosphate. The protein operates within carbohydrate degradation; glycolysis; D-glyceraldehyde 3-phosphate and glycerone phosphate from D-glucose: step 4/4. Functionally, fructose-bisphosphate aldolase that plays a key role in glycolysis and gluconeogenesis. Involved in gibberellin-mediated root growth. May be regulated by CDPK13. Associates with vacuolar proton ATPase (V-ATPase) and may regulate the V-ATPase-mediated control of root cell elongation. The protein is Fructose-bisphosphate aldolase 1, cytoplasmic of Oryza sativa subsp. japonica (Rice).